A 93-amino-acid polypeptide reads, in one-letter code: HssA/B-like protein 23 (93 aa).

This sequence belongs to the hssA/B family.

This chain is HssA/B-like protein 23 (hssl23), found in Dictyostelium discoideum (Social amoeba).